We begin with the raw amino-acid sequence, 523 residues long: Signal peptide peptidase-like 2A (523 aa).

A signal peptide spans 1 to 25 (MGLLHSLHAPAAALLWSCLLGLAAA). Residues 26 to 175 (QEAILHASTN…PSWPNFDYTL (150 aa)) are Lumenal-facing. Residues asparagine 51, asparagine 61, asparagine 69, asparagine 119, asparagine 129, and asparagine 135 are each glycosylated (N-linked (GlcNAc...) asparagine). Positions 70–155 (LTGTALCHLS…KDFKDMKETL (86 aa)) constitute a PA domain. A helical membrane pass occupies residues 176–196 (VVIFVIAVFTVALGGYWSGLI). At 197-224 (ELENMKSVEDAEDRETRKKKDDYLTFSP) the chain is on the cytoplasmic side. The chain crosses the membrane as a helical span at residues 225-245 (LTVVVFVVICCIMIVLLYFFY). At 246–247 (RW) the chain is on the lumenal side. The chain crosses the membrane as a helical span at residues 248-268 (LVYVMIAIFCIASSMSLYNCL). At 269–288 (SALIHRMPCGQCTILCCGKN) the chain is on the cytoplasmic side. The chain crosses the membrane as a helical span at residues 289 to 309 (IKVSLIFLSGLCISVAVVWAV). Residues 310 to 315 (FRNEDR) are Lumenal-facing. Residues 316–336 (WAWILQDILGIAFCLNLIKTM) traverse the membrane as a helical segment. At 337–344 (KLPNFMSC) the chain is on the cytoplasmic side. A helical transmembrane segment spans residues 345 to 365 (VILLGLLLIYDVFFVFITPFI). Residue aspartate 355 is part of the active site. Residues 366–403 (TKNGESIMVELAAGPFENAEKLPVVIRVPKLMGYSVMS) are Lumenal-facing. A helical transmembrane segment spans residues 404–424 (VCSVPVSVLGFGDIIVPGLLI). The active site involves aspartate 416. The Cytoplasmic segment spans residues 425 to 440 (AYCRRFDVQTGSSIYY). The helical transmembrane segment at 441–461 (ISSTIAYAVGMIITFVVLMVM) threads the bilayer. Over 462 to 463 (KT) the chain is Lumenal. A helical membrane pass occupies residues 464–484 (GQPALLYLVPCTLITVSVVAW). Positions 466 to 468 (PAL) match the PAL motif. The Cytoplasmic segment spans residues 485 to 523 (SRKEMKKFWKGSSYQVMDHLDYSTNEENPVTTDEQIVQQ). The YXXo lysosomal targeting motif signature appears at 498–501 (YQVM).

Belongs to the peptidase A22B family. Interacts with ITM2B. In terms of processing, glycosylated.

Its subcellular location is the late endosome membrane. The protein localises to the lysosome membrane. It is found in the membrane. Intramembrane-cleaving aspartic protease (I-CLiP) that cleaves type II membrane signal peptides in the hydrophobic plane of the membrane. Functions in FASLG, ITM2B and TNF processing. Catalyzes the intramembrane cleavage of the anchored fragment of shed TNF-alpha (TNF), which promotes the release of the intracellular domain (ICD) for signaling to the nucleus. Also responsible for the intramembrane cleavage of Fas antigen ligand FASLG, which promotes the release of the intracellular FasL domain (FasL ICD). Essential for degradation of the invariant chain CD74 that plays a central role in the function of antigen-presenting cells in the immune system. Plays a role in the regulation of innate and adaptive immunity. The protein is Signal peptide peptidase-like 2A of Mus musculus (Mouse).